Reading from the N-terminus, the 446-residue chain is Tubulin beta chain (446 aa).

GTP is bound by residues Gln11, Glu69, Ser138, Gly142, Thr143, Gly144, Asn204, and Asn226. Glu69 contributes to the Mg(2+) binding site. The interval 422–446 (YQQYQDAGIDEEEEEYEEELPEGEE) is disordered. The span at 429–446 (GIDEEEEEYEEELPEGEE) shows a compositional bias: acidic residues.

This sequence belongs to the tubulin family. As to quaternary structure, dimer of alpha and beta chains. A typical microtubule is a hollow water-filled tube with an outer diameter of 25 nm and an inner diameter of 15 nM. Alpha-beta heterodimers associate head-to-tail to form protofilaments running lengthwise along the microtubule wall with the beta-tubulin subunit facing the microtubule plus end conferring a structural polarity. Microtubules usually have 13 protofilaments but different protofilament numbers can be found in some organisms and specialized cells. Mg(2+) is required as a cofactor.

It localises to the cytoplasm. It is found in the cytoskeleton. Tubulin is the major constituent of microtubules, a cylinder consisting of laterally associated linear protofilaments composed of alpha- and beta-tubulin heterodimers. Microtubules grow by the addition of GTP-tubulin dimers to the microtubule end, where a stabilizing cap forms. Below the cap, tubulin dimers are in GDP-bound state, owing to GTPase activity of alpha-tubulin. The polypeptide is Tubulin beta chain (TUB2) (Gibberella zeae (strain ATCC MYA-4620 / CBS 123657 / FGSC 9075 / NRRL 31084 / PH-1) (Wheat head blight fungus)).